The following is a 158-amino-acid chain: UPF0262 protein R00612 (158 aa).

This sequence belongs to the UPF0262 family.

The sequence is that of UPF0262 protein R00612 from Rhizobium meliloti (strain 1021) (Ensifer meliloti).